The following is a 187-amino-acid chain: T-cell receptor-associated transmembrane adapter 1 (187 aa).

The Extracellular portion of the chain corresponds to 1 to 7 (MSGSSGC). The chain crosses the membrane as a helical; Signal-anchor for type III membrane protein span at residues 8–28 (PFFLWGLLAFLGLALVISLIF). The Cytoplasmic portion of the chain corresponds to 29–187 (NISHYVEKQR…LIRAKREPVI (159 aa)). A Phosphoserine modification is found at Ser-46. Tyr-80 bears the Phosphotyrosine mark. An interaction with PIK3R1 region spans residues 80-83 (YEQM). Residues 117-138 (SVKGKRRRPRKQNTNVSDRGKD) are disordered.

As to quaternary structure, homodimer; disulfide-linked. Interacts with CD3Z. When phosphorylated, interacts with PIK3R1. Post-translationally, phosphorylated on tyrosines upon TCR activation. In terms of tissue distribution, present in T-cells (at protein level).

The protein resides in the cell membrane. Stabilizes the TCR (T-cell antigen receptor)/CD3 complex at the surface of T-cells. This is T-cell receptor-associated transmembrane adapter 1 (Trat1) from Mus musculus (Mouse).